The primary structure comprises 440 residues: Streptokinase (440 aa).

An N-terminal signal peptide occupies residues 1-26 (MKNYLSFGMFALLFALTFGTVKPVQA). The tract at residues 72–94 (PAQGGKTEQGLRPKSKPLATDKG) is disordered.

In terms of biological role, this protein is not a protease, but it activates plasminogen by complexing with it. As a potential virulence factor, it is thought to prevent the formation of effective fibrin barriers around the site of infection, thereby contributing to the invasiveness of the cells. In Streptococcus pyogenes, this protein is Streptokinase (ska).